The primary structure comprises 286 residues: ATP synthase gamma chain (286 aa).

The protein belongs to the ATPase gamma chain family. As to quaternary structure, F-type ATPases have 2 components, CF(1) - the catalytic core - and CF(0) - the membrane proton channel. CF(1) has five subunits: alpha(3), beta(3), gamma(1), delta(1), epsilon(1). CF(0) has three main subunits: a, b and c.

It localises to the cell membrane. Its function is as follows. Produces ATP from ADP in the presence of a proton gradient across the membrane. The gamma chain is believed to be important in regulating ATPase activity and the flow of protons through the CF(0) complex. The protein is ATP synthase gamma chain of Ureaplasma parvum serovar 3 (strain ATCC 27815 / 27 / NCTC 11736).